A 285-amino-acid polypeptide reads, in one-letter code: Coagulation factor IX (285 aa).

Tyr23 bears the Sulfotyrosine mark. A glycan (N-linked (GlcNAc...) asparagine) is linked at Asn25. Phosphothreonine; alternate is present on Thr27. O-linked (GalNAc...) threonine; alternate glycosylation is present at Thr27. An N-linked (GlcNAc...) asparagine glycan is attached at Asn45. An O-linked (GalNAc...) threonine glycan is attached at Thr47. The Peptidase S1 domain occupies 59 to 285 (VVGGEDAKPG…YTKVSRYVNW (227 aa)). Residues Cys84 and Cys100 are joined by a disulfide bond. The active-site Charge relay system is His99. Ca(2+)-binding residues include Asn115, Glu120, and Glu123. 2 N-linked (GlcNAc...) asparagine glycosylation sites follow: Asn127 and Asn138. Residue Asp147 is the Charge relay system of the active site. 2 disulfides stabilise this stretch: Cys214/Cys228 and Cys239/Cys267. Residue Ser243 is the Charge relay system of the active site.

It belongs to the peptidase S1 family. As to quaternary structure, heterodimer of a light chain and a heavy chain; disulfide-linked. Interacts (inactive and activated) with F11 (activated) in calcium-dependent manner. Interacts with SERPINC1. Activated by factor XIa, which excises the activation peptide. The propeptide can also be removed by snake venom protease. Activated by coagulation factor VIIa-tissue factor (F7-F3) complex in calcium-dependent manner.

It localises to the secreted. The catalysed reaction is Selective cleavage of Arg-|-Ile bond in factor X to form factor Xa.. Its function is as follows. Factor IX is a vitamin K-dependent plasma protein that participates in the intrinsic pathway of blood coagulation by converting factor X to its active form in the presence of Ca(2+) ions, phospholipids, and factor VIIIa. The polypeptide is Coagulation factor IX (F9) (Cavia porcellus (Guinea pig)).